Reading from the N-terminus, the 98-residue chain is Citrate lyase acyl carrier protein (98 aa).

S14 bears the O-(phosphoribosyl dephospho-coenzyme A)serine mark.

The protein belongs to the CitD family. Oligomer with a subunit composition of (alpha,beta,gamma)6.

Its subcellular location is the cytoplasm. Covalent carrier of the coenzyme of citrate lyase. The chain is Citrate lyase acyl carrier protein from Escherichia coli O81 (strain ED1a).